The following is a 139-amino-acid chain: Arsenate reductase (139 aa).

Catalysis depends on nucleophile residues C10, C82, and C89. 2 disulfides stabilise this stretch: C10–C82 and C82–C89.

The protein belongs to the low molecular weight phosphotyrosine protein phosphatase family. Thioredoxin-coupled ArsC subfamily.

The protein resides in the cytoplasm. It catalyses the reaction arsenate + [thioredoxin]-dithiol + H(+) = arsenite + [thioredoxin]-disulfide + H2O. Functionally, catalyzes the reduction of arsenate [As(V)] to arsenite [As(III)]. The protein is Arsenate reductase of Shouchella clausii (strain KSM-K16) (Alkalihalobacillus clausii).